Here is a 267-residue protein sequence, read N- to C-terminus: Indole-3-glycerol phosphate synthase (267 aa).

The protein belongs to the TrpC family.

The catalysed reaction is 1-(2-carboxyphenylamino)-1-deoxy-D-ribulose 5-phosphate + H(+) = (1S,2R)-1-C-(indol-3-yl)glycerol 3-phosphate + CO2 + H2O. Its pathway is amino-acid biosynthesis; L-tryptophan biosynthesis; L-tryptophan from chorismate: step 4/5. The protein is Indole-3-glycerol phosphate synthase of Cupriavidus pinatubonensis (strain JMP 134 / LMG 1197) (Cupriavidus necator (strain JMP 134)).